Consider the following 373-residue polypeptide: MAEQDYIFELRGVSKYFDDTCALENIDLQIRNGEFLTLLGPSGCGKTTILRLLSGFETPSSGDVILSGRVVNDVPPEQRQVNTVFQNYALFPHMTVRDNVGFGLKMQKRPKDEIARRVREALKMVHLEQFGDRKPARLSGGQQQRVAIARAVVNNPYVLLLDEPFSALDFKLRKKMQLEIKHLQRQLGITFVFVTHDQEEAFAMSDRVVVMNDGRIEQIGSPQEIYEEPANLYVARFVGDINILDGTITARRNGVLYDATLEGVPFPVQTGKQFETGDRVKVLLRPEDIRLHMMHDLPDGEYFTGAIEETVYKGATVDIVVRLDSPSEGQPGKQLLVAEFFNEDDEEINYTPGERVAVTWVNGWEVVLGDDGE.

In terms of domain architecture, ABC transporter spans 8–238 (FELRGVSKYF…PANLYVARFV (231 aa)). 40–47 (GPSGCGKT) is an ATP binding site.

Belongs to the ABC transporter superfamily. Spermidine/putrescine importer (TC 3.A.1.11.1) family. As to quaternary structure, the complex is composed of two ATP-binding proteins (PotA), two transmembrane proteins (PotB and PotC) and a solute-binding protein (PotD).

It localises to the cell inner membrane. The enzyme catalyses ATP + H2O + polyamine-[polyamine-binding protein]Side 1 = ADP + phosphate + polyamineSide 2 + [polyamine-binding protein]Side 1.. Its function is as follows. Part of the ABC transporter complex PotABCD involved in spermidine/putrescine import. Responsible for energy coupling to the transport system. The sequence is that of Spermidine/putrescine import ATP-binding protein PotA from Oleidesulfovibrio alaskensis (strain ATCC BAA-1058 / DSM 17464 / G20) (Desulfovibrio alaskensis).